Consider the following 248-residue polypeptide: Adenosylcobinamide-GDP ribazoletransferase (248 aa).

7 helical membrane passes run 24 to 44 (EINL…IGAW), 70 to 90 (IIIT…GLFS), 106 to 126 (VGAN…SLFL), 134 to 154 (IGWL…LLFA), 168 to 188 (IFLG…LVAL), 189 to 209 (GAFF…FTII), and 228 to 248 (AGGQ…WGLI).

The protein belongs to the CobS family. It depends on Mg(2+) as a cofactor.

The protein resides in the cell membrane. The enzyme catalyses alpha-ribazole + adenosylcob(III)inamide-GDP = adenosylcob(III)alamin + GMP + H(+). It catalyses the reaction alpha-ribazole 5'-phosphate + adenosylcob(III)inamide-GDP = adenosylcob(III)alamin 5'-phosphate + GMP + H(+). The protein operates within cofactor biosynthesis; adenosylcobalamin biosynthesis; adenosylcobalamin from cob(II)yrinate a,c-diamide: step 7/7. Its function is as follows. Joins adenosylcobinamide-GDP and alpha-ribazole to generate adenosylcobalamin (Ado-cobalamin). Also synthesizes adenosylcobalamin 5'-phosphate from adenosylcobinamide-GDP and alpha-ribazole 5'-phosphate. This Listeria monocytogenes serotype 4b (strain F2365) protein is Adenosylcobinamide-GDP ribazoletransferase.